Here is a 203-residue protein sequence, read N- to C-terminus: Holliday junction branch migration complex subunit RuvA (203 aa).

The domain I stretch occupies residues M1–Y63. The interval D64–G142 is domain II. Residues Q143–D153 are flexible linker. The segment at D153–K203 is domain III.

Belongs to the RuvA family. In terms of assembly, homotetramer. Forms an RuvA(8)-RuvB(12)-Holliday junction (HJ) complex. HJ DNA is sandwiched between 2 RuvA tetramers; dsDNA enters through RuvA and exits via RuvB. An RuvB hexamer assembles on each DNA strand where it exits the tetramer. Each RuvB hexamer is contacted by two RuvA subunits (via domain III) on 2 adjacent RuvB subunits; this complex drives branch migration. In the full resolvosome a probable DNA-RuvA(4)-RuvB(12)-RuvC(2) complex forms which resolves the HJ.

The protein resides in the cytoplasm. In terms of biological role, the RuvA-RuvB-RuvC complex processes Holliday junction (HJ) DNA during genetic recombination and DNA repair, while the RuvA-RuvB complex plays an important role in the rescue of blocked DNA replication forks via replication fork reversal (RFR). RuvA specifically binds to HJ cruciform DNA, conferring on it an open structure. The RuvB hexamer acts as an ATP-dependent pump, pulling dsDNA into and through the RuvAB complex. HJ branch migration allows RuvC to scan DNA until it finds its consensus sequence, where it cleaves and resolves the cruciform DNA. This chain is Holliday junction branch migration complex subunit RuvA, found in Latilactobacillus sakei subsp. sakei (strain 23K) (Lactobacillus sakei subsp. sakei).